A 474-amino-acid polypeptide reads, in one-letter code: Pyruvate kinase (474 aa).

Arg37 provides a ligand contact to substrate. Residues Asn39, Ser41, and Asp71 each contribute to the K(+) site. 39–42 (NFSH) serves as a coordination point for ATP. ATP is bound by residues Arg78 and Lys160. Glu222 serves as a coordination point for Mg(2+). 3 residues coordinate substrate: Gly245, Asp246, and Thr278. Position 246 (Asp246) interacts with Mg(2+).

This sequence belongs to the pyruvate kinase family. Homotetramer. The cofactor is Mg(2+). K(+) serves as cofactor.

It carries out the reaction pyruvate + ATP = phosphoenolpyruvate + ADP + H(+). It participates in carbohydrate degradation; glycolysis; pyruvate from D-glyceraldehyde 3-phosphate: step 5/5. The protein is Pyruvate kinase (ttuE) of Agrobacterium vitis (Rhizobium vitis).